The sequence spans 1189 residues: Disabled homolog 2-interacting protein (1189 aa).

A disordered region spans residues 1–75; sequence MSAGGSARKS…EPSAATPFRV (75 aa). The span at 20 to 38 shows a compositional bias: basic residues; that stretch reads LLRRPRLQRQRSRSRSRTR. Over residues 39-49 the composition is skewed to basic and acidic residues; sequence PARESPQERPG. The PH domain maps to 101 to 202; sequence SFRHILPGFR…WMENLRRAVH (102 aa). Residues 193-311 form the C2 domain; sequence WMENLRRAVH…AGRQFVEKWY (119 aa). The Ras-GAP domain maps to 387–595; that stretch reads GKVKDFLTDL…TNMQRFLLEI (209 aa). The tract at residues 646–943 is necessary for interaction with AKT1; that stretch reads LRDVHTALST…RTPPNLLSTL (298 aa). Positions 653-668 are enriched in polar residues; the sequence is LSTPGSGQLPGTNDLA. Disordered regions lie at residues 653 to 678 and 715 to 742; these read LSTP…SSSI and RSSG…MANG. The segment covering 669–678 has biased composition (low complexity); that stretch reads STPGSGSSSI. Polar residues predominate over residues 715–731; that stretch reads RSSGVQPSPARSSSYSE. At Ser-728 the chain carries Phosphoserine; by MAP3K5 and RIPK1. Ser-747 is subject to Phosphoserine. Disordered regions lie at residues 803–823, 843–865, 895–998, 1015–1035, and 1164–1189; these read AGQT…PQLL, PRGL…NSEE, SLTE…SPNA, EDEG…KDEL, and RNGI…SSNC. Residues 852-865 are compositionally biased toward low complexity; sequence EGHSSLSSHSNSEE. A compositionally biased stretch (pro residues) spans 919–931; sequence QPPPPPPPPPPAP. Polar residues-rich tracts occupy residues 938 to 955 and 966 to 976; these read NLLS…TLAS and RLRQQSSSSKG. Phosphoserine is present on residues Ser-978 and Ser-995. Residues 1023 to 1035 are compositionally biased toward basic and acidic residues; the sequence is PPHRDRLRSKDEL. A coiled-coil region spans residues 1026–1159; that stretch reads RDRLRSKDEL…SALTQLKERY (134 aa).

In terms of assembly, on plasma membrane, exists in an inactive form complexed with TNFR1; in response to TNF-alpha, dissociates from TNFR1 complex, translocates to cytoplasm and forms part of an intracellular signaling complex comprising TRADD, RIPK1, TRAF2 and MAP3K5. Interacts with DAB1. Interacts (via NPXY motif) with DAB2 (via PID domain). Interacts (via PH domain) with ERN1. Part of a cytoplasmic complex made of HIPK1, DAB2IP and MAP3K5 in response to TNF-alpha; this complex formation promotes MAP3K5-JNK activation and subsequent apoptosis. Interacts (via N-terminal domain) with JAK2; the interaction occurs in a IFNG/IFN-gamma-dependent manner and inhibits JAK2 autophosphorylation activity. Interacts (via C2 domain) with GSK3B; the interaction stimulates GSK3B kinase activation. Interacts (via C2 domain) with PPP2CA. Interacts (via proline-rich motif) with a regulatory p85 subunit (via SH3 domain) of the PI3K complex; the interaction inhibits the PI3K-AKT complex activity in a TNF-alpha-dependent manner in prostate cancer (PCa) cells. Interacts with AKT1; the interaction is increased in a TNF-alpha-induced manner. Interacts (via C2 domain and active form preferentially) with KDR/VEGFR2 (tyrosine-phosphorylated active form preferentially); the interaction occurs at the late phase of VEGFA response and inhibits KDR/VEGFR2 activity. Interacts (via N-terminus C2 domain) with MAP3K5 ('Ser-966' dephosphorylated form preferentially); the interaction occurs in a TNF-alpha-induced manner. Interacts (via Ras-GAP domain) with the catalytic subunit of protein phosphatase PP2A; the interaction occurs in resting endothelial cells, is further enhanced by TNF-alpha stimulation and is required to bridge PP2A to MAP3K5. Interacts (via C-terminus PER domain) with TRAF2 (via zinc fingers); the interaction occurs in a TNF-alpha-dependent manner. Interacts with 14-3-3 proteins; the interaction occurs in a TNF-alpha-dependent manner. Interacts (via Ras-GAP domain) with RIPK1 (via kinase domain); the interaction occurs in a TNF-alpha-dependent manner. Interacts with RAB40C; acts as a GAP for RAB40C. In response to TNF-alpha-induction, phosphorylated at Ser-728; phosphorylation leads to a conformational change, and thus, increases its association with 14-3-3 proteins, MAP3K5, RIPK1 and TRAF2 in endothelial cells; also stimulates regulatory p85 subunit sequestring and PI3K-p85 complex activity inhibition. Expressed in endothelial and vascular smooth muscle cells (VSMCs). Expressed in prostate epithelial but poorly in prostate cancer cells. Poorly expressed in medulloblastoma cells compared to cerebellar precursor proliferating progenitor cells (at protein level). Low expression in prostate. Down-regulated in prostate cancer.

Its subcellular location is the cytoplasm. It is found in the cell membrane. The protein localises to the membrane. It localises to the cell projection. The protein resides in the dendrite. Functionally, functions as a scaffold protein implicated in the regulation of a large spectrum of both general and specialized signaling pathways. Involved in several processes such as innate immune response, inflammation and cell growth inhibition, apoptosis, cell survival, angiogenesis, cell migration and maturation. Also plays a role in cell cycle checkpoint control; reduces G1 phase cyclin levels resulting in G0/G1 cell cycle arrest. Mediates signal transduction by receptor-mediated inflammatory signals, such as the tumor necrosis factor (TNF), interferon (IFN) or lipopolysaccharide (LPS). Modulates the balance between phosphatidylinositol 3-kinase (PI3K)-AKT-mediated cell survival and apoptosis stimulated kinase (MAP3K5)-JNK signaling pathways; sequesters both AKT1 and MAP3K5 and counterbalances the activity of each kinase by modulating their phosphorylation status in response to pro-inflammatory stimuli. Acts as a regulator of the endoplasmic reticulum (ER) unfolded protein response (UPR) pathway; specifically involved in transduction of the ER stress-response to the JNK cascade through ERN1. Mediates TNF-alpha-induced apoptosis activation by facilitating dissociation of inhibitor 14-3-3 from MAP3K5; recruits the PP2A phosphatase complex which dephosphorylates MAP3K5 on 'Ser-966', leading to the dissociation of 13-3-3 proteins and activation of the MAP3K5-JNK signaling pathway in endothelial cells. Also mediates TNF/TRAF2-induced MAP3K5-JNK activation, while it inhibits CHUK-NF-kappa-B signaling. Acts a negative regulator in the IFN-gamma-mediated JAK-STAT signaling cascade by inhibiting smooth muscle cell (VSMCs) proliferation and intimal expansion, and thus, prevents graft arteriosclerosis (GA). Acts as a GTPase-activating protein (GAP) for the ADP ribosylation factor 6 (ARF6), Ras and RAB40C. Promotes hydrolysis of the ARF6-bound GTP and thus, negatively regulates phosphatidylinositol 4,5-bisphosphate (PIP2)-dependent TLR4-TIRAP-MyD88 and NF-kappa-B signaling pathways in endothelial cells in response to lipopolysaccharides (LPS). Binds specifically to phosphatidylinositol 4-phosphate (PtdIns4P) and phosphatidylinositol 3-phosphate (PtdIns3P). In response to vascular endothelial growth factor (VEGFA), acts as a negative regulator of the VEGFR2-PI3K-mediated angiogenic signaling pathway by inhibiting endothelial cell migration and tube formation. In the developing brain, promotes both the transition from the multipolar to the bipolar stage and the radial migration of cortical neurons from the ventricular zone toward the superficial layer of the neocortex in a glial-dependent locomotion process. Probable downstream effector of the Reelin signaling pathway; promotes Purkinje cell (PC) dendrites development and formation of cerebellar synapses. Also functions as a tumor suppressor protein in prostate cancer progression; prevents cell proliferation and epithelial-to-mesenchymal transition (EMT) through activation of the glycogen synthase kinase-3 beta (GSK3B)-induced beta-catenin and inhibition of PI3K-AKT and Ras-MAPK survival downstream signaling cascades, respectively. This chain is Disabled homolog 2-interacting protein, found in Homo sapiens (Human).